Consider the following 167-residue polypeptide: Xanthine-guanine phosphoribosyltransferase (167 aa).

Residues 47–48 (RG), Gln79, and 102–110 (DDLVDSGKT) each bind 5-phospho-alpha-D-ribose 1-diphosphate. GMP is bound at residue Gln79. Mg(2+) is bound at residue Asp103. Guanine-binding residues include Asp106 and Ile149. Positions 106 and 149 each coordinate xanthine. GMP is bound by residues 106–110 (DSGKT) and 148–149 (WI).

The protein belongs to the purine/pyrimidine phosphoribosyltransferase family. XGPT subfamily. As to quaternary structure, homotetramer. Requires Mg(2+) as cofactor.

It localises to the cell inner membrane. It catalyses the reaction GMP + diphosphate = guanine + 5-phospho-alpha-D-ribose 1-diphosphate. It carries out the reaction XMP + diphosphate = xanthine + 5-phospho-alpha-D-ribose 1-diphosphate. The enzyme catalyses IMP + diphosphate = hypoxanthine + 5-phospho-alpha-D-ribose 1-diphosphate. It functions in the pathway purine metabolism; GMP biosynthesis via salvage pathway; GMP from guanine: step 1/1. Its pathway is purine metabolism; XMP biosynthesis via salvage pathway; XMP from xanthine: step 1/1. Its function is as follows. Purine salvage pathway enzyme that catalyzes the transfer of the ribosyl-5-phosphate group from 5-phospho-alpha-D-ribose 1-diphosphate (PRPP) to the N9 position of the 6-oxopurines guanine and xanthine to form the corresponding ribonucleotides GMP (guanosine 5'-monophosphate) and XMP (xanthosine 5'-monophosphate), with the release of PPi. To a lesser extent, also acts on hypoxanthine. This chain is Xanthine-guanine phosphoribosyltransferase, found in Cereibacter sphaeroides (strain ATCC 17025 / ATH 2.4.3) (Rhodobacter sphaeroides).